The following is a 176-amino-acid chain: MMRSLNRCSKHRAAWLLLALTTFSLELVALYFQHVMLLKPCVLCVYQRCALYGVVAAGLVGAIAPATPLRFSGLAIWLYSAWEGLQLAMKHTDIQLHPSPFVTCDFFVSFPAWLPLDKWLPSVFSASGDCAVRQWHFLSLEMPQWMIVIFGAYLAVAVLILLAQFFPPRKRDLFSR.

The Cytoplasmic segment spans residues 1–14 (MMRSLNRCSKHRAA). Residues 15–31 (WLLLALTTFSLELVALY) form a helical membrane-spanning segment. Residues 32 to 49 (FQHVMLLKPCVLCVYQRC) are Periplasmic-facing. A disulfide bridge connects residues Cys-41 and Cys-44. The helical transmembrane segment at 50-65 (ALYGVVAAGLVGAIAP) threads the bilayer. At 66 to 71 (ATPLRF) the chain is on the cytoplasmic side. Residues 72-89 (SGLAIWLYSAWEGLQLAM) traverse the membrane as a helical segment. At 90 to 144 (KHTDIQLHPSPFVTCDFFVSFPAWLPLDKWLPSVFSASGDCAVRQWHFLSLEMPQ) the chain is on the periplasmic side. A disulfide bond links Cys-104 and Cys-130. A helical transmembrane segment spans residues 145-163 (WMIVIFGAYLAVAVLILLA). Residues 164 to 176 (QFFPPRKRDLFSR) are Cytoplasmic-facing.

Belongs to the DsbB family.

It is found in the cell inner membrane. Functionally, required for disulfide bond formation in some periplasmic proteins. Acts by oxidizing the DsbA protein. The protein is Disulfide bond formation protein B of Sodalis glossinidius (strain morsitans).